Here is a 289-residue protein sequence, read N- to C-terminus: MKLLVKAPAKINLSLDVLGKRQDGYHEVKMIMTTIDLADRLELTELAEDRIEILSHNRYVPDDQRNLAYQAAKLLKEKFNVKKGVSITIEKTIPVAAGLAGGSSDAAATLRGLNKLWNLGLTIDELAELGAEIGSDVSFCVYGGTAIATGRGEKIEHIKTPPSCWVILAKPHIGVSTADVYGNLKLNRVTHPNVDKMVDVINSGDYKGICDTVGNVLEDVTFGMHPEVARIKSQMKRFGADAVLMSGSGPTVFGLVHHDSRMHRIYNGLKGFCEQVYAVRLLGERETLE.

Lys10 is an active-site residue. Residue 94-104 (PVAAGLAGGSS) participates in ATP binding. Asp136 is a catalytic residue.

This sequence belongs to the GHMP kinase family. IspE subfamily.

It catalyses the reaction 4-CDP-2-C-methyl-D-erythritol + ATP = 4-CDP-2-C-methyl-D-erythritol 2-phosphate + ADP + H(+). It functions in the pathway isoprenoid biosynthesis; isopentenyl diphosphate biosynthesis via DXP pathway; isopentenyl diphosphate from 1-deoxy-D-xylulose 5-phosphate: step 3/6. Functionally, catalyzes the phosphorylation of the position 2 hydroxy group of 4-diphosphocytidyl-2C-methyl-D-erythritol. The protein is 4-diphosphocytidyl-2-C-methyl-D-erythritol kinase of Bacillus cereus (strain G9842).